We begin with the raw amino-acid sequence, 142 residues long: Small ribosomal subunit protein bS6 (142 aa).

Residues 96-142 form a disordered region; that stretch reads VTGQSEMLKAEENRSERRERRERPEHDGSADGDDSDSDSDNSDNADE. Residues 103–124 show a composition bias toward basic and acidic residues; the sequence is LKAEENRSERRERRERPEHDGS. The span at 125 to 142 shows a compositional bias: acidic residues; the sequence is ADGDDSDSDSDNSDNADE.

This sequence belongs to the bacterial ribosomal protein bS6 family.

Its function is as follows. Binds together with bS18 to 16S ribosomal RNA. The chain is Small ribosomal subunit protein bS6 from Pseudomonas fluorescens (strain Pf0-1).